Consider the following 248-residue polypeptide: 2,3-bisphosphoglycerate-dependent phosphoglycerate mutase (248 aa).

Substrate contacts are provided by residues 8 to 15 (RHGESTWN), 21 to 22 (TG), R60, 87 to 90 (ERHY), K98, 114 to 115 (RR), and 183 to 184 (GN). Catalysis depends on H9, which acts as the Tele-phosphohistidine intermediate. E87 (proton donor/acceptor) is an active-site residue.

The protein belongs to the phosphoglycerate mutase family. BPG-dependent PGAM subfamily. As to quaternary structure, homodimer.

The catalysed reaction is (2R)-2-phosphoglycerate = (2R)-3-phosphoglycerate. It functions in the pathway carbohydrate degradation; glycolysis; pyruvate from D-glyceraldehyde 3-phosphate: step 3/5. In terms of biological role, catalyzes the interconversion of 2-phosphoglycerate and 3-phosphoglycerate. The protein is 2,3-bisphosphoglycerate-dependent phosphoglycerate mutase of Paraburkholderia phymatum (strain DSM 17167 / CIP 108236 / LMG 21445 / STM815) (Burkholderia phymatum).